A 277-amino-acid chain; its full sequence is Myelin proteolipid protein (277 aa).

Residues 2-10 are Cytoplasmic-facing; sequence GLLECCARC. S-palmitoyl cysteine attachment occurs at residues Cys6, Cys7, and Cys10. Residues 11-36 traverse the membrane as a helical segment; that stretch reads LIGAPFASLVATGLCFFGVALFCGCG. The Extracellular portion of the chain corresponds to 37-59; the sequence is HEALTGTEQLIETYFSKNYQDYE. Residues 60 to 88 traverse the membrane as a helical segment; it reads YLIDVIHAFQYVIYGTASFFFLYGALLLA. Residues 89–151 lie on the Cytoplasmic side of the membrane; sequence EGFYTTGAVR…LGKWLGHPDK (63 aa). 3 S-palmitoyl cysteine lipidation sites follow: Cys109, Cys139, and Cys141. Residues 152-178 traverse the membrane as a helical segment; that stretch reads FVGITYVLTIVWLLAFACSAVPVYIYF. Residues 179 to 238 lie on the Extracellular side of the membrane; that stretch reads NTWTTCQSIAFPTKTTASIGTLCADARMYGVLPWNAFPGKVCGSNLLSICKTSEFQMTFH. 2 disulfide bridges follow: Cys184-Cys228 and Cys201-Cys220. Thr199 carries the O-palmitoyl threonine lipid modification. Residues 239–268 traverse the membrane as a helical segment; the sequence is LFIAAFVGAAATLVSLLTFMIAATYNFAVL. At 269 to 277 the chain is on the cytoplasmic side; it reads KLMGRGTKF.

The protein belongs to the myelin proteolipid protein family.

It localises to the cell membrane. This is the major myelin protein from the central nervous system. It plays an important role in the formation or maintenance of the multilamellar structure of myelin. The protein is Myelin proteolipid protein (PLP1) of Gallus gallus (Chicken).